Reading from the N-terminus, the 703-residue chain is Lethal(3)malignant brain tumor-like protein 2 (703 aa).

The interval 1–70 (MEKPRGTEET…AGELPTSPLH (70 aa)) is disordered. A Phosphoserine modification is found at Ser13. Residues 15–25 (PMEEEEDDDLE) show a composition bias toward acidic residues. Residues 35–49 (SYNSSAGSESSSYLE) show a composition bias toward low complexity. Positions 50 to 60 (ESSEAENEDRE) are enriched in acidic residues. Ser67 is modified (phosphoserine). The segment at 81-116 (DGSGSEPAVCEMCGIVGTREAFFSKTKRFCSVSCSR) adopts an FCS-type zinc-finger fold. Positions 90, 93, 110, and 114 each coordinate Zn(2+). MBT repeat units follow at residues 179–283 (FDWG…LVPP), 291–391 (TDWK…IKMS), 397–500 (MSHH…LTPP), and 508–604 (FDWE…LQPP). Ser338 is subject to Phosphoserine. A Glycyl lysine isopeptide (Lys-Gly) (interchain with G-Cter in SUMO2) cross-link involves residue Lys405. Disordered stretches follow at residues 604–649 (PVSA…KKPL) and 672–703 (VKEEHQDLPSPDRSPSPLLPLPTESIKQERDS). Positions 619-634 (TKKKKKQFGKKRKRIP) are enriched in basic residues. Residues Lys647 and Lys673 each participate in a glycyl lysine isopeptide (Lys-Gly) (interchain with G-Cter in SUMO2) cross-link. A phosphoserine mark is found at Ser681, Ser685, and Ser687. Residue Lys698 forms a Glycyl lysine isopeptide (Lys-Gly) (interchain with G-Cter in SUMO1); alternate linkage. Residue Lys698 forms a Glycyl lysine isopeptide (Lys-Gly) (interchain with G-Cter in SUMO2); alternate linkage.

As to quaternary structure, part of the E2F6.com-1 complex in G0 phase composed of E2F6, MGA, MAX, TFDP1, CBX3, BAT8, EUHMTASE1, RING1, RNF2, MBLR, BAT8 and YAF2.

Its subcellular location is the nucleus. Functionally, putative Polycomb group (PcG) protein. PcG proteins maintain the transcriptionally repressive state of genes, probably via a modification of chromatin, rendering it heritably changed in its expressibility. Its association with a chromatin-remodeling complex suggests that it may contribute to prevent expression of genes that trigger the cell into mitosis. Binds to monomethylated and dimethylated 'Lys-20' on histone H4. Binds histone H3 peptides that are monomethylated or dimethylated on 'Lys-4', 'Lys-9' or 'Lys-27'. The protein is Lethal(3)malignant brain tumor-like protein 2 (L3mbtl2) of Rattus norvegicus (Rat).